The chain runs to 161 residues: uncharacterized protein (161 aa).

Disordered regions lie at residues 47 to 83 (KPAK…NNIN) and 104 to 137 (RRLQ…SKNY). Residues 50–64 (KRNIHGHNNHTRSSN) show a composition bias toward basic residues. 2 stretches are compositionally biased toward low complexity: residues 73–83 (NINHNNNNNIN) and 115–130 (SSSS…TNDN).

This is an uncharacterized protein from Dictyostelium discoideum (Social amoeba).